A 280-amino-acid polypeptide reads, in one-letter code: Dolichyl-diphosphooligosaccharide--protein glycosyltransferase subunit 2 (280 aa).

Positions 1–16 are cleaved as a signal peptide; that stretch reads MKLLLVLLTIASVALA. Topologically, residues 17 to 187 are lumenal; sequence AVDDVAVNNF…FRQPEKRPSA (171 aa). Residues 188 to 208 form a helical membrane-spanning segment; sequence LISDLFTIICLSPLLILVVLW. Topologically, residues 209-222 are cytoplasmic; that stretch reads SQVGINFQNAPASP. Residues 223 to 243 form a helical membrane-spanning segment; that stretch reads WVPIFHVGLIGIFGIYFMFWV. A topological domain (lumenal) is located at residue glutamine 244. Residues 245–265 form a helical membrane-spanning segment; the sequence is FDMFVTLKYLAVLGFLTFVAG. The Cytoplasmic portion of the chain corresponds to 266–280; the sequence is NRVLRAISESKQKSE.

Belongs to the SWP1 family. As to quaternary structure, component of the oligosaccharyltransferase (OST) complex.

The protein localises to the endoplasmic reticulum membrane. It functions in the pathway protein modification; protein glycosylation. In terms of biological role, subunit of the oligosaccharyl transferase (OST) complex that catalyzes the initial transfer of a defined glycan (Glc(3)Man(9)GlcNAc(2) in eukaryotes) from the lipid carrier dolichol-pyrophosphate to an asparagine residue within an Asn-X-Ser/Thr consensus motif in nascent polypeptide chains, the first step in protein N-glycosylation. N-glycosylation occurs cotranslationally and the complex associates with the Sec61 complex at the channel-forming translocon complex that mediates protein translocation across the endoplasmic reticulum (ER). All subunits are required for a maximal enzyme activity. The polypeptide is Dolichyl-diphosphooligosaccharide--protein glycosyltransferase subunit 2 (Caenorhabditis elegans).